A 401-amino-acid chain; its full sequence is tRNA pseudouridine synthase Pus10 (401 aa).

The 132-residue stretch at 64-195 (ALAKSGHRES…DGSVSVEVMP (132 aa)) folds into the THUMP domain.

It belongs to the pseudouridine synthase Pus10 family.

It carries out the reaction uridine(54) in tRNA = pseudouridine(54) in tRNA. The enzyme catalyses uridine(55) in tRNA = pseudouridine(55) in tRNA. In terms of biological role, responsible for synthesis of pseudouridine from uracil-54 and uracil-55 in the psi GC loop of transfer RNAs. The polypeptide is tRNA pseudouridine synthase Pus10 (Caldivirga maquilingensis (strain ATCC 700844 / DSM 13496 / JCM 10307 / IC-167)).